Consider the following 118-residue polypeptide: Small ribosomal subunit protein uS13 (118 aa).

Positions Gly94–Lys118 are disordered.

The protein belongs to the universal ribosomal protein uS13 family. As to quaternary structure, part of the 30S ribosomal subunit. Forms a loose heterodimer with protein S19. Forms two bridges to the 50S subunit in the 70S ribosome.

Located at the top of the head of the 30S subunit, it contacts several helices of the 16S rRNA. In the 70S ribosome it contacts the 23S rRNA (bridge B1a) and protein L5 of the 50S subunit (bridge B1b), connecting the 2 subunits; these bridges are implicated in subunit movement. Contacts the tRNAs in the A and P-sites. This Salmonella typhi protein is Small ribosomal subunit protein uS13.